The primary structure comprises 631 residues: Phosphomethylpyrimidine synthase (631 aa).

Residues Asn-239, Met-268, Tyr-297, His-333, 353–355 (SRG), 394–397 (DGLR), and Glu-433 each bind substrate. Zn(2+) is bound at residue His-437. Tyr-460 lines the substrate pocket. Zn(2+) is bound at residue His-501. Positions 581, 584, and 589 each coordinate [4Fe-4S] cluster.

It belongs to the ThiC family. Homodimer. It depends on [4Fe-4S] cluster as a cofactor.

The catalysed reaction is 5-amino-1-(5-phospho-beta-D-ribosyl)imidazole + S-adenosyl-L-methionine = 4-amino-2-methyl-5-(phosphooxymethyl)pyrimidine + CO + 5'-deoxyadenosine + formate + L-methionine + 3 H(+). It functions in the pathway cofactor biosynthesis; thiamine diphosphate biosynthesis. Catalyzes the synthesis of the hydroxymethylpyrimidine phosphate (HMP-P) moiety of thiamine from aminoimidazole ribotide (AIR) in a radical S-adenosyl-L-methionine (SAM)-dependent reaction. This chain is Phosphomethylpyrimidine synthase, found in Escherichia coli O127:H6 (strain E2348/69 / EPEC).